We begin with the raw amino-acid sequence, 184 residues long: Late embryogenesis abundant protein (184 aa).

The segment at 49–184 (TGNIAEYPTE…KLPGHHNHHP (136 aa)) is disordered. Positions 60–86 (PPAGVAAGTGAAATTAAGVTTSETTTG) are enriched in low complexity. Composition is skewed to basic and acidic residues over residues 87–98 (QEHHGSLGEHLR) and 122–138 (KDKIKDKLGGGKHKDEQ). A compositionally biased stretch (low complexity) spans 139-159 (TPTTATTTGPTTTTTTTGAAA). Positions 160–177 (DQHHEKKGILEKIKEKLP) are enriched in basic and acidic residues.

It belongs to the plant dehydrin family.

Its function is as follows. LEA protein are late embryogenesis abundant in higher plant seed embryos. There are two subsets of LEA proteins (5a, and 5b), the first ones are expressed when the cotyledon weight reach 80 mg and the second set are expressed above 100 mg. The function of those proteins is not known. The chain is Late embryogenesis abundant protein from Raphanus sativus (Radish).